The chain runs to 112 residues: Low molecular weight protein antigen 6 (112 aa).

It localises to the secreted. The protein is Low molecular weight protein antigen 6 (cfp6) of Mycobacterium bovis (strain ATCC BAA-935 / AF2122/97).